We begin with the raw amino-acid sequence, 164 residues long: Phospholipase A and acyltransferase 4 (164 aa).

Residues 1-40 are essential for its ability regulate keratinocyte differentiation; it reads MASPHQEPKPGDLIEIFRLGYEHWALYIGDGYVIHLAPPS. The Cytoplasmic segment spans residues 1 to 134; that stretch reads MASPHQEPKP…SRCKQVEKAK (134 aa). An LRAT domain is found at 13–129; the sequence is LIEIFRLGYE…LRYGKSRCKQ (117 aa). Residues His23 and His35 contribute to the active site. Residue Cys113 is the Acyl-thioester intermediate of the active site. The tract at residues 124 to 164 is interaction with TGM1; sequence KSRCKQVEKAKVEVGVATALGILVVAGCSFAIRRYQKKATA. The chain crosses the membrane as a helical span at residues 135 to 155; the sequence is VEVGVATALGILVVAGCSFAI. Topologically, residues 156-164 are lumenal; that stretch reads RRYQKKATA.

The protein belongs to the H-rev107 family. Interacts with TGM1. Widely expressed.

The protein resides in the membrane. It carries out the reaction a 1,2-diacyl-sn-glycero-3-phosphocholine + H2O = a 1-acyl-sn-glycero-3-phosphocholine + a fatty acid + H(+). The enzyme catalyses a 1,2-diacyl-sn-glycero-3-phosphocholine + H2O = a 2-acyl-sn-glycero-3-phosphocholine + a fatty acid + H(+). It catalyses the reaction 1,2-dihexadecanoyl-sn-glycero-3-phosphocholine + H2O = 1-hexadecanoyl-sn-glycero-3-phosphocholine + hexadecanoate + H(+). The catalysed reaction is 1,2-dihexadecanoyl-sn-glycero-3-phosphocholine + H2O = 2-hexadecanoyl-sn-glycero-3-phosphocholine + hexadecanoate + H(+). It carries out the reaction 1-hexadecanoyl-2-(9Z-octadecenoyl)-sn-glycero-3-phosphocholine + H2O = 2-(9Z-octadecenoyl)-sn-glycero-3-phosphocholine + hexadecanoate + H(+). The enzyme catalyses 1-hexadecanoyl-2-(9Z-octadecenoyl)-sn-glycero-3-phosphocholine + H2O = 1-hexadecanoyl-sn-glycero-3-phosphocholine + (9Z)-octadecenoate + H(+). It catalyses the reaction 1-hexadecanoyl-2-(5Z,8Z,11Z,14Z-eicosatetraenoyl)-sn-glycero-3-phosphocholine + H2O = 2-(5Z,8Z,11Z,14Z)-eicosatetraenoyl-sn-glycero-3-phosphocholine + hexadecanoate + H(+). The catalysed reaction is 1-hexadecanoyl-2-(9Z,12Z-octadecadienoyl)-sn-glycero-3-phosphoethanolamine + H2O = 1-hexadecanoyl-sn-glycero-3-phosphoethanolamine + (9Z,12Z)-octadecadienoate + H(+). It carries out the reaction 1-hexadecanoyl-2-(9Z,12Z-octadecadienoyl)-sn-glycero-3-phosphoethanolamine + H2O = 2-(9Z,12Z)-octadecadienoyl-sn-glycero-3-phosphoethanolamine + hexadecanoate + H(+). The enzyme catalyses 1-hexadecanoyl-2-(5Z,8Z,11Z,14Z-eicosatetraenoyl)-sn-glycero-3-phosphoethanolamine + H2O = 2-(5Z,8Z,11Z,14Z)-eicosatetraenoyl-sn-glycero-3-phosphoethanolamine + hexadecanoate + H(+). It catalyses the reaction 1-hexanoyl-2-acyl-sn-glycero-3-phosphocholine + H2O = hexanoate + a 2-acyl-sn-glycero-3-phosphocholine + H(+). The catalysed reaction is 1,2-diheptadecanoyl-sn-glycero-3-phosphoethanolamine + 1-(9Z-octadecenoyl)-2-hexadecanoyl-sn-glycero-3-phosphocholine = 1,2-diheptadecanoyl-sn-glycero-3-phospho-N-hexadecanoyl-ethanolamine + 1-(9Z-octadecenoyl)-sn-glycero-3-phosphocholine + H(+). It carries out the reaction 1,2-diheptadecanoyl-sn-glycero-3-phosphoethanolamine + 1-(9Z-octadecenoyl)-2-hexadecanoyl-sn-glycero-3-phosphocholine = 1,2-diheptadecanoyl-sn-glycero-3-phospho-N-(9Z-octadecenoyl)-ethanolamine + 2-hexadecanoyl-sn-glycero-3-phosphocholine + H(+). Functionally, exhibits both phospholipase A1/2 and acyltransferase activities. Shows phospholipase A1 (PLA1) and A2 (PLA2), catalyzing the calcium-independent release of fatty acids from the sn-1 or sn-2 position of glycerophospholipids. For most substrates, PLA1 activity is much higher than PLA2 activity. Shows O-acyltransferase activity, catalyzing the transfer of a fatty acyl group from glycerophospholipid to the hydroxyl group of lysophospholipid. Shows N-acyltransferase activity, catalyzing the calcium-independent transfer of a fatty acyl group at the sn-1 position of phosphatidylcholine (PC) and other glycerophospholipids to the primary amine of phosphatidylethanolamine (PE), forming N-acylphosphatidylethanolamine (NAPE), which serves as precursor for N-acylethanolamines (NAEs). Promotes keratinocyte differentiation via activation of TGM1. This Homo sapiens (Human) protein is Phospholipase A and acyltransferase 4.